We begin with the raw amino-acid sequence, 216 residues long: Peptide methionine sulfoxide reductase MsrA (216 aa).

The active site involves Cys54.

This sequence belongs to the MsrA Met sulfoxide reductase family.

The catalysed reaction is L-methionyl-[protein] + [thioredoxin]-disulfide + H2O = L-methionyl-(S)-S-oxide-[protein] + [thioredoxin]-dithiol. The enzyme catalyses [thioredoxin]-disulfide + L-methionine + H2O = L-methionine (S)-S-oxide + [thioredoxin]-dithiol. Its function is as follows. Has an important function as a repair enzyme for proteins that have been inactivated by oxidation. Catalyzes the reversible oxidation-reduction of methionine sulfoxide in proteins to methionine. The polypeptide is Peptide methionine sulfoxide reductase MsrA (Xanthomonas campestris pv. campestris (strain ATCC 33913 / DSM 3586 / NCPPB 528 / LMG 568 / P 25)).